Reading from the N-terminus, the 1197-residue chain is SRC kinase signaling inhibitor 1 (1197 aa).

Positions 19–45 (AEGRARSPREEVGPRDPGGRGEPDPER) are enriched in basic and acidic residues. Residues 19 to 80 (AEGRARSPRE…GGSGGRRFSN (62 aa)) form a disordered region. Phosphoserine occurs at positions 47 and 52. Positions 65-75 (LGGGGSGGSGG) are enriched in gly residues. Ser79 bears the Phosphoserine mark. Thr86 bears the Phosphothreonine mark. A phosphoserine mark is found at Ser87, Ser98, Ser178, Ser200, Ser204, Ser214, and Ser260. Tyr276 is modified (phosphotyrosine). The disordered stretch occupies residues 319 to 415 (ASRESSPTRR…RRDVKPDEDL (97 aa)). Over residues 321 to 331 (RESSPTRRLNN) the composition is skewed to polar residues. Residues 332–341 (LSPASHLASS) show a composition bias toward low complexity. 3 positions are modified to phosphoserine: Ser333, Ser342, and Ser359. Residues 348–366 (PSGLPSGLPSGSPSRSRLS) show a composition bias toward low complexity. Omega-N-methylarginine occurs at positions 364 and 371. Ser378, Ser397, and Ser399 each carry phosphoserine. A compositionally biased stretch (polar residues) spans 391–400 (PTSQGVSPSP). Residues 404 to 415 (LERRDVKPDEDL) are compositionally biased toward basic and acidic residues. Tyr431 is subject to Phosphotyrosine. The tract at residues 501 to 676 (GFRLPPSSPQ…AVSSTPAGQP (176 aa)) is disordered. Over residues 520-531 (GGPPPPHSPYSG) the composition is skewed to pro residues. Phosphoserine is present on residues Ser527, Ser530, and Ser534. Arg535 is modified (omega-N-methylarginine). A phosphoserine mark is found at Ser537, Ser547, Ser549, Ser551, and Ser556. Residues 595–607 (KDTETRERMEAME) are compositionally biased toward basic and acidic residues. 2 positions are modified to phosphoserine: Ser631 and Ser655. Phosphothreonine is present on residues Thr658 and Thr671. An interaction with SNAP25 region spans residues 681 to 731 (RLQMQMHLRGLQNSASDLRGQLQQLRKLQLQNQESVRALLKRTEAELSMRV). 2 coiled-coil regions span residues 688-708 (LRGL…LRKL) and 760-780 (EELI…IQRD). Phosphoserine occurs at positions 878 and 900. Disordered regions lie at residues 891 to 949 (GLDF…ERDW) and 983 to 1065 (DCAS…VVTS). Thr918 is subject to Phosphothreonine. Residue Ser1021 is modified to Phosphoserine. Residues 1036–1045 (KSPPPPPPRR) are compositionally biased toward pro residues. Phosphoserine is present on residues Ser1077 and Ser1094. Positions 1141–1163 (SRLKAAQGPAGSPDKGKHGKQRT) are disordered.

This sequence belongs to the SRCIN1 family. Interacts with BCAR1/p130Cas through its C-terminal domain and with CSK, CTTN and SRC. Also interacts with MAPRE3/EB3, SORBS3/vinexin and the N-terminal coiled-coil region of SNAP25. Tyrosine-phosphorylated in response to EGF and to cell adhesion to integrin ligands. Expressed exclusively in brain. Abundant in telencephalon and expressed moderately in cerebellum, hypothalamus, thalamus, superior and inferior colliculi, and olfactory bulb. No expression detected in medulla oblongata, spinal cord or pituitary gland. Enriched in the neuropil rather than soma in the thalamus, corpus striatum and cerebral cortex. Detected in astrocytes.

Its subcellular location is the cytoplasm. It is found in the cytoskeleton. It localises to the cell projection. The protein resides in the axon. The protein localises to the dendrite. Its subcellular location is the presynapse. It is found in the postsynapse. It localises to the postsynaptic density. Acts as a negative regulator of SRC by activating CSK which inhibits SRC activity and downstream signaling, leading to impaired cell spreading and migration. Regulates dendritic spine morphology. Involved in calcium-dependent exocytosis. May play a role in neurotransmitter release or synapse maintenance. The polypeptide is SRC kinase signaling inhibitor 1 (Rattus norvegicus (Rat)).